Here is a 663-residue protein sequence, read N- to C-terminus: Zeaxanthin epoxidase, chloroplastic (663 aa).

Residues 1–50 (MYSTVFYTSVHPSTSAFSRKQLPLLISKDFPTELYHSLPCSRSLENGQIK) constitute a chloroplast transit peptide. Residues 81 to 109 (KVLVAGGGIGGLVFALAAKKRGFDVLVFE) and 359 to 372 (TFSWGKGRVTLLGD) contribute to the FAD site. The FHA domain maps to 547 to 611 (LVLSRDENMP…HGTWITDNEG (65 aa)).

FAD is required as a cofactor. In terms of tissue distribution, higher expression in leaves than in roots.

The protein resides in the plastid. It localises to the chloroplast membrane. It is found in the chloroplast thylakoid membrane. It catalyses the reaction all-trans-zeaxanthin + 4 reduced [2Fe-2S]-[ferredoxin] + 2 O2 + 4 H(+) = all-trans-violaxanthin + 4 oxidized [2Fe-2S]-[ferredoxin] + 2 H2O. It participates in plant hormone biosynthesis; abscisate biosynthesis. Converts zeaxanthin into antheraxanthin and subsequently violaxanthin. Involved in the epoxidation of zeaxanthin. Plays an important role in resistance to stresses, seed development and dormancy. This Nicotiana plumbaginifolia (Leadwort-leaved tobacco) protein is Zeaxanthin epoxidase, chloroplastic (ABA2).